The following is a 1504-amino-acid chain: NAC-alpha domain-containing protein 1 (1504 aa).

Disordered stretches follow at residues 127–150 (KPGARPQPEGASWDAGPSGAASAW), 208–261 (DREG…HGPH), 315–356 (PSDW…SSWS), 396–436 (LPQE…STSA), 460–525 (DTSA…TNSQ), 539–565 (GLESEAMRTPPDQQAAPGPQVEETPTV), 701–812 (VLPP…EEGV), 834–1064 (DLES…LPVA), 1099–1366 (PFQH…AMSK), and 1430–1467 (PSEPSALVPELSPGPRVRPECEEQEEEDEEVEEAGLEP). Positions 342–354 (SSESSLSADSSSS) are enriched in low complexity. Positions 398–407 (QEEEEDEEDV) are enriched in acidic residues. 2 stretches are compositionally biased toward low complexity: residues 408–422 (AATAAAAAPAAATPD) and 462–475 (SAASSDSDSASYAG). Positions 510 to 525 (STPQTSEQEICLTNSQ) are enriched in polar residues. Over residues 775-792 (PQESPTASSLTLQSSHPT) the composition is skewed to polar residues. Over residues 930–939 (PPASNQAQQN) the composition is skewed to low complexity. A compositionally biased stretch (polar residues) spans 958–968 (STLSTKTSEPT). A compositionally biased stretch (basic and acidic residues) spans 989–1005 (EAHDGVKTHSPQREALR). Residue Ser-998 is modified to Phosphoserine. Residues 1016–1031 (SPGQGNGPKSATSQGA) show a composition bias toward polar residues. Over residues 1159–1171 (PGPPDPCLCPPPQ) the composition is skewed to pro residues. The span at 1213 to 1222 (VSLSPHSTLN) shows a compositional bias: polar residues. The residue at position 1268 (Ser-1268) is a Phosphoserine. The NAC-A/B domain maps to 1354–1419 (SRSEKKARKA…AKIEDLSQQV (66 aa)). Residues 1451–1464 (EEQEEEDEEVEEAG) are compositionally biased toward acidic residues.

The protein belongs to the NAC-alpha family.

It localises to the cytoplasm. The protein resides in the nucleus. Functionally, may prevent inappropriate targeting of non-secretory polypeptides to the endoplasmic reticulum (ER). May bind to nascent polypeptide chains as they emerge from the ribosome and block their interaction with the signal recognition particle (SRP), which normally targets nascent secretory peptides to the ER. May also reduce the inherent affinity of ribosomes for protein translocation sites in the ER membrane (M sites). The chain is NAC-alpha domain-containing protein 1 (Nacad) from Mus musculus (Mouse).